A 524-amino-acid polypeptide reads, in one-letter code: MELPESAWEQCVSSLQSELPAQQFNTWIRPLRVQQAEASNQLHLIAPNRFVLDWVNDKFKSRIDELLSSADHHPITSVEISVAPRRSTSFETNQGVAARQKRQQEAPRQNIASSQPSNSYSRQPQQPAVEMPAESQMAQVELLPAAPPAPLNNGYNTESFAQPYNDNPMGQGKVDKVDVEGGLQHKSNLNPTFIFDNFVVGKSNQLGLAAATQVAENPGGSYNPLFIYGGVGLGKTHLMHAVGNALCVRKPGAKVVYLHSERFVADMVKALQLNAINDFKRYYRSVDALLIDDIQFFAGKERSQEEFFHTFNALLEGGQQIILTCDRYPKEINGLEERLKSRFGWGLTVAIEPPELETRVAILKRKAEQVGAPLPNDAAFFIAQRIRSNVRELEGALKRVIANAHFTGRDISVELVREALKDLLALQDRLVSIDNIQRVVAEYYKIKVSDLHSKRRSRSVARPRQVAMYLAKDLTHHSLPEIGEAFGGRDHTTVLHACRKIKEMIESDADIREDVKNLLRTLTT.

Residues 1-73 are domain I, interacts with DnaA modulators; that stretch reads MELPESAWEQ…DELLSSADHH (73 aa). The tract at residues 73–187 is domain II; it reads HPITSVEISV…DVEGGLQHKS (115 aa). Polar residues-rich tracts occupy residues 86-95, 106-126, and 153-165; these read RSTSFETNQG, APRQ…QPQQ, and NGYN…QPYN. The interval 86 to 173 is disordered; that stretch reads RSTSFETNQG…YNDNPMGQGK (88 aa). A domain III, AAA+ region region spans residues 188 to 404; that stretch reads NLNPTFIFDN…GALKRVIANA (217 aa). ATP contacts are provided by G232, G234, K235, and T236. The domain IV, binds dsDNA stretch occupies residues 405 to 524; sequence HFTGRDISVE…VKNLLRTLTT (120 aa).

It belongs to the DnaA family. As to quaternary structure, oligomerizes as a right-handed, spiral filament on DNA at oriC.

The protein resides in the cytoplasm. Its function is as follows. Plays an essential role in the initiation and regulation of chromosomal replication. ATP-DnaA binds to the origin of replication (oriC) to initiate formation of the DNA replication initiation complex once per cell cycle. Binds the DnaA box (a 9 base pair repeat at the origin) and separates the double-stranded (ds)DNA. Forms a right-handed helical filament on oriC DNA; dsDNA binds to the exterior of the filament while single-stranded (ss)DNA is stabiized in the filament's interior. The ATP-DnaA-oriC complex binds and stabilizes one strand of the AT-rich DNA unwinding element (DUE), permitting loading of DNA polymerase. After initiation quickly degrades to an ADP-DnaA complex that is not apt for DNA replication. Binds acidic phospholipids. The chain is Chromosomal replication initiator protein DnaA from Saccharophagus degradans (strain 2-40 / ATCC 43961 / DSM 17024).